The following is a 444-amino-acid chain: MAERKYFGTDGVRGKVGQFPITPDFALKLGWAAGKVLATQGSKQVLIGKDTRISGYMLESALEAGLAAAGLSAAFTGPMPTPAIAYLTRTFRAEAGIVISASHNPYDDNGIKFFSAIGEKLPDEVEEAIEAMLDQPMDCVESAELGRASRINDAAGRYIEFCKSTFPSHLSLDGYKIVVDCANGATYHIAPNVMRELGAEVIEIGTHPNGLNINEKCGATDIKALQQVVVEAGADVGLAYDGDGDRLIMVDHLGNKVDGDQILFIIAREALCSGKLHGGVVGTLMSNMSLELALKELAIPFARANVGDRYVLEVLKEKGWKLGGENSGHIIVLDKNTTGDGIVASLEVLAAMASHKLSLNDLAKAVPLFPQVLINVRFAGGANPLDSEDVKAVAKAVEQRLAGKGRILLRKSGTEPLIRVMVECEDGALAQSCAEEISEAVKRN.

Residue Ser102 is the Phosphoserine intermediate of the active site. Mg(2+) contacts are provided by Ser102, Asp241, Asp243, and Asp245. Ser102 carries the post-translational modification Phosphoserine.

The protein belongs to the phosphohexose mutase family. Mg(2+) is required as a cofactor. In terms of processing, activated by phosphorylation.

It carries out the reaction alpha-D-glucosamine 1-phosphate = D-glucosamine 6-phosphate. Catalyzes the conversion of glucosamine-6-phosphate to glucosamine-1-phosphate. This is Phosphoglucosamine mutase from Glaesserella parasuis serovar 5 (strain SH0165) (Haemophilus parasuis).